The following is a 322-amino-acid chain: Transaldolase (322 aa).

K136 acts as the Schiff-base intermediate with substrate in catalysis.

This sequence belongs to the transaldolase family. Type 1 subfamily. As to quaternary structure, homodimer.

Its subcellular location is the cytoplasm. It carries out the reaction D-sedoheptulose 7-phosphate + D-glyceraldehyde 3-phosphate = D-erythrose 4-phosphate + beta-D-fructose 6-phosphate. The protein operates within carbohydrate degradation; pentose phosphate pathway; D-glyceraldehyde 3-phosphate and beta-D-fructose 6-phosphate from D-ribose 5-phosphate and D-xylulose 5-phosphate (non-oxidative stage): step 2/3. Functionally, transaldolase is important for the balance of metabolites in the pentose-phosphate pathway. The sequence is that of Transaldolase from Xanthomonas euvesicatoria pv. vesicatoria (strain 85-10) (Xanthomonas campestris pv. vesicatoria).